The following is an 895-amino-acid chain: Tiger protein D1 (895 aa).

An N-terminal signal peptide occupies residues 1 to 21 (MIHKMYFFLILLFSLFIIVYS). The Extracellular portion of the chain corresponds to 22–861 (APNRVTRNET…ERKSSKLSGG (840 aa)). N-linked (GlcNAc...) asparagine glycans are attached at residues Asn29, Asn52, Asn171, Asn181, Asn253, Asn257, Asn277, Asn288, Asn351, Asn368, Asn407, Asn428, Asn451, Asn481, Asn507, Asn521, Asn573, Asn583, Asn593, Asn623, Asn652, Asn685, Asn720, Asn757, Asn766, Asn780, and Asn799. The IPT/TIG 1 domain occupies 295-381 (AVISSISSVS…SGSDAVTFTY (87 aa)). 2 IPT/TIG domains span residues 560-638 (PKVE…SFYL) and 642-725 (PVIY…TLTY). The chain crosses the membrane as a helical span at residues 862 to 882 (AIAGITIGCVAGAGALVGSVF). Topologically, residues 883 to 895 (YFKLITRVKKAFN) are cytoplasmic.

It localises to the cell membrane. Its function is as follows. May be involved in the regulation of aggregation. Activates tgrC1. The polypeptide is Tiger protein D1 (tgrD1) (Dictyostelium discoideum (Social amoeba)).